The following is a 130-amino-acid chain: Small ribosomal subunit protein uS11c (130 aa).

This sequence belongs to the universal ribosomal protein uS11 family. In terms of assembly, part of the 30S ribosomal subunit.

The protein localises to the plastid. It is found in the chloroplast. The protein is Small ribosomal subunit protein uS11c of Chlorokybus atmophyticus (Soil alga).